The primary structure comprises 92 residues: Large ribosomal subunit protein eL43 (92 aa).

4 residues coordinate Zn(2+): Cys-39, Cys-42, Cys-57, and Cys-60. The C4-type zinc-finger motif lies at 39 to 60; sequence CSFCGKTKMKRKAVGIWHCGSC.

It belongs to the eukaryotic ribosomal protein eL43 family. As to quaternary structure, component of the large ribosomal subunit.

It localises to the cytoplasm. Component of the large ribosomal subunit. The ribosome is a large ribonucleoprotein complex responsible for the synthesis of proteins in the cell. This is Large ribosomal subunit protein eL43 (RPL37A) from Gallus gallus (Chicken).